The following is a 298-amino-acid chain: Methylsterol monooxygenase 1-1 (298 aa).

3 consecutive transmembrane segments (helical) span residues Ile42–Ala62, Phe96–Ile116, and Ser118–Ile138. The Fatty acid hydroxylase domain maps to Leu132–Thr267. The Histidine box-1 motif lies at His147 to His151. Positions His160–His164 match the Histidine box-2 motif. Residues Thr189–Leu209 form a helical membrane-spanning segment. The Histidine box-3 motif lies at Tyr239–Tyr245.

This sequence belongs to the sterol desaturase family. Interacts with ACBP1. Requires Fe cation as cofactor. In terms of tissue distribution, expressed in rosettes, stems, roots, floral buds, flowers and siliques.

Its subcellular location is the endoplasmic reticulum membrane. The enzyme catalyses 4,4-dimethyl-5alpha-cholest-7-en-3beta-ol + 6 Fe(II)-[cytochrome b5] + 3 O2 + 5 H(+) = 4alpha-carboxy-4beta-methyl-5alpha-cholest-7-ene-3beta-ol + 6 Fe(III)-[cytochrome b5] + 4 H2O. It catalyses the reaction 24-methylenecycloartanol + 6 Fe(II)-[cytochrome b5] + 3 O2 + 5 H(+) = 4alpha-carboxy-4beta,14alpha-dimethyl-9beta,19-cyclo-5alpha-ergost-24(24(1))-en-3beta-ol + 6 Fe(III)-[cytochrome b5] + 4 H2O. Its function is as follows. Non-heme iron oxygenase involved in sterols biosynthesis by catalyzing the removal of the first methyl group at the C-4 position. 4,4-dimethyl-9-beta,19-cyclopropylsterols such as 24-methylenecycloartanol are the preferred substrates. Acts as a rate-limiting enzyme in the sterol pathway via interaction with ACBP1; sterols serve as lipid modulators for gene expression of homeodomain-leucine zipper IV transcription factors. Together with SMO1-2, involved in the maintenance of sterol composition to balance auxin and cytokinin activities during embryogenesis. This Arabidopsis thaliana (Mouse-ear cress) protein is Methylsterol monooxygenase 1-1.